The sequence spans 604 residues: Sulfite reductase [NADPH] flavoprotein alpha-component (604 aa).

In terms of domain architecture, Flavodoxin-like spans 66-204; the sequence is VTVLSASQTG…AADGWTGRIV (139 aa). FMN contacts are provided by residues 72–77, 119–122, and 155–164; these read SQTGNA, STQG, and LGDSSYPNFC. A disordered region spans residues 212-231; sequence AKNRATPAPQTTPPAGLQTA. The span at 216–231 shows a compositional bias: low complexity; that stretch reads ATPAPQTTPPAGLQTA. Residues 239–453 form the FAD-binding FR-type domain; it reads ADPFPAALLA…VERNDGFRLP (215 aa). FAD-binding positions include Thr327, Gln361, 391–394, 409–411, and 424–427; these read RLYS, TVG, and GGAS. NADP(+)-binding positions include 524 to 525, 530 to 534, and Asp566; these read SR and KIYVQ. Tyr604 serves as a coordination point for FAD.

Belongs to the NADPH-dependent sulphite reductase flavoprotein subunit CysJ family. It in the N-terminal section; belongs to the flavodoxin family. This sequence in the C-terminal section; belongs to the flavoprotein pyridine nucleotide cytochrome reductase family. Alpha(8)-beta(8). The alpha component is a flavoprotein, the beta component is a hemoprotein. FAD is required as a cofactor. Requires FMN as cofactor.

The catalysed reaction is hydrogen sulfide + 3 NADP(+) + 3 H2O = sulfite + 3 NADPH + 4 H(+). It functions in the pathway sulfur metabolism; hydrogen sulfide biosynthesis; hydrogen sulfide from sulfite (NADPH route): step 1/1. In terms of biological role, component of the sulfite reductase complex that catalyzes the 6-electron reduction of sulfite to sulfide. This is one of several activities required for the biosynthesis of L-cysteine from sulfate. The flavoprotein component catalyzes the electron flow from NADPH -&gt; FAD -&gt; FMN to the hemoprotein component. The chain is Sulfite reductase [NADPH] flavoprotein alpha-component from Neisseria meningitidis serogroup C / serotype 2a (strain ATCC 700532 / DSM 15464 / FAM18).